Reading from the N-terminus, the 793-residue chain is Probable phosphoketolase 2 (793 aa).

This sequence belongs to the XFP family. The cofactor is thiamine diphosphate.

This chain is Probable phosphoketolase 2, found in Nostoc sp. (strain PCC 7120 / SAG 25.82 / UTEX 2576).